Consider the following 764-residue polypeptide: 5-methyltetrahydropteroyltriglutamate--homocysteine methyltransferase (764 aa).

5-methyltetrahydropteroyltri-L-glutamate is bound by residues 16-19 (RELK) and K117. Residues 442–444 (IGS) and E495 contribute to the L-homocysteine site. Residues 442–444 (IGS) and E495 each bind L-methionine. 5-methyltetrahydropteroyltri-L-glutamate contacts are provided by residues 526–527 (RC) and W572. D610 is a binding site for L-homocysteine. D610 provides a ligand contact to L-methionine. Residue E616 coordinates 5-methyltetrahydropteroyltri-L-glutamate. 3 residues coordinate Zn(2+): H652, C654, and E676. Catalysis depends on H705, which acts as the Proton donor. A Zn(2+)-binding site is contributed by C737.

It belongs to the vitamin-B12 independent methionine synthase family. It depends on Zn(2+) as a cofactor.

It carries out the reaction 5-methyltetrahydropteroyltri-L-glutamate + L-homocysteine = tetrahydropteroyltri-L-glutamate + L-methionine. It functions in the pathway amino-acid biosynthesis; L-methionine biosynthesis via de novo pathway; L-methionine from L-homocysteine (MetE route): step 1/1. Its function is as follows. Catalyzes the transfer of a methyl group from 5-methyltetrahydrofolate to homocysteine resulting in methionine formation. The sequence is that of 5-methyltetrahydropteroyltriglutamate--homocysteine methyltransferase from Bordetella bronchiseptica (strain ATCC BAA-588 / NCTC 13252 / RB50) (Alcaligenes bronchisepticus).